A 110-amino-acid polypeptide reads, in one-letter code: MAEGEIEDRELEELRRKKLEELQKKAELERQAQIAAAQRRMALKRILTPEALARLDNIRIVRPELAEALEQQIIALASSGRVKVPIDDNTLKKILEAVYSQTRKEYKFRL.

It belongs to the PDCD5 family.

This is DNA-binding protein Pars_1791 from Pyrobaculum arsenaticum (strain DSM 13514 / JCM 11321 / PZ6).